We begin with the raw amino-acid sequence, 234 residues long: Small ribosomal subunit protein uS2 (234 aa).

This sequence belongs to the universal ribosomal protein uS2 family.

This chain is Small ribosomal subunit protein uS2, found in Prochlorococcus marinus (strain MIT 9515).